The chain runs to 1034 residues: DNA polymerase I B, chloroplastic/mitochondrial (1034 aa).

A chloroplast and mitochondrion-targeting transit peptide spans 1-55; it reads MGVSLRHLSPSSFWVSRRPRVSSSILSFLVPRRRILCTRKVAIIKGNAGYSTATD. One can recognise a 3'-5' exonuclease domain in the interval 270–468; sequence ACDTEVSRID…LYESMKKQLQ (199 aa). Residues 700 to 1030 are polymerase; sequence HAIAALCEVC…SVDAKCAQNW (331 aa).

It belongs to the DNA polymerase type-A family. In terms of tissue distribution, expressed in shoot apical meristem.

It is found in the mitochondrion. Its subcellular location is the plastid. The protein resides in the chloroplast. It carries out the reaction DNA(n) + a 2'-deoxyribonucleoside 5'-triphosphate = DNA(n+1) + diphosphate. With respect to regulation, not inhibited by aphidicolin. In terms of biological role, in addition to polymerase activity, this DNA polymerase exhibits 5'-3' exonuclease activity. Required for DNA replication and accumulation in plastids and mitochondria. This Arabidopsis thaliana (Mouse-ear cress) protein is DNA polymerase I B, chloroplastic/mitochondrial (POLIB).